A 262-amino-acid polypeptide reads, in one-letter code: 1-(5-phosphoribosyl)-5-[(5-phosphoribosylamino)methylideneamino] imidazole-4-carboxamide isomerase (262 aa).

Asp8 serves as the catalytic Proton acceptor. The active-site Proton donor is the Asp130.

This sequence belongs to the HisA/HisF family.

It localises to the cytoplasm. The enzyme catalyses 1-(5-phospho-beta-D-ribosyl)-5-[(5-phospho-beta-D-ribosylamino)methylideneamino]imidazole-4-carboxamide = 5-[(5-phospho-1-deoxy-D-ribulos-1-ylimino)methylamino]-1-(5-phospho-beta-D-ribosyl)imidazole-4-carboxamide. It participates in amino-acid biosynthesis; L-histidine biosynthesis; L-histidine from 5-phospho-alpha-D-ribose 1-diphosphate: step 4/9. This is 1-(5-phosphoribosyl)-5-[(5-phosphoribosylamino)methylideneamino] imidazole-4-carboxamide isomerase from Chloroherpeton thalassium (strain ATCC 35110 / GB-78).